A 78-amino-acid polypeptide reads, in one-letter code: Large ribosomal subunit protein bL28 (78 aa).

Residues Met1–Arg28 are disordered.

Belongs to the bacterial ribosomal protein bL28 family.

This is Large ribosomal subunit protein bL28 from Corynebacterium diphtheriae (strain ATCC 700971 / NCTC 13129 / Biotype gravis).